The sequence spans 295 residues: NAD kinase (295 aa).

The active-site Proton acceptor is the D74. NAD(+)-binding positions include 74–75 (DG), 148–149 (ND), H159, R176, D178, and 189–194 (TAYALS).

The protein belongs to the NAD kinase family. It depends on a divalent metal cation as a cofactor.

It localises to the cytoplasm. It catalyses the reaction NAD(+) + ATP = ADP + NADP(+) + H(+). Functionally, involved in the regulation of the intracellular balance of NAD and NADP, and is a key enzyme in the biosynthesis of NADP. Catalyzes specifically the phosphorylation on 2'-hydroxyl of the adenosine moiety of NAD to yield NADP. The chain is NAD kinase from Legionella pneumophila (strain Corby).